A 282-amino-acid chain; its full sequence is Phosphatidylglycerol--prolipoprotein diacylglyceryl transferase (282 aa).

A run of 4 helical transmembrane segments spans residues 23 to 43 (IGPL…LLGW), 71 to 91 (FIVW…IFFY), 106 to 126 (IWNG…AMII), and 132 to 152 (GIPI…GLFF). Arginine 154 provides a ligand contact to a 1,2-diacyl-sn-glycero-3-phospho-(1'-sn-glycerol). Helical transmembrane passes span 189-209 (LYEA…LVYG), 217-237 (GFIT…VEFF), and 252-272 (WLTM…WAML).

The protein belongs to the Lgt family.

It is found in the cell inner membrane. The catalysed reaction is L-cysteinyl-[prolipoprotein] + a 1,2-diacyl-sn-glycero-3-phospho-(1'-sn-glycerol) = an S-1,2-diacyl-sn-glyceryl-L-cysteinyl-[prolipoprotein] + sn-glycerol 1-phosphate + H(+). It participates in protein modification; lipoprotein biosynthesis (diacylglyceryl transfer). Catalyzes the transfer of the diacylglyceryl group from phosphatidylglycerol to the sulfhydryl group of the N-terminal cysteine of a prolipoprotein, the first step in the formation of mature lipoproteins. The polypeptide is Phosphatidylglycerol--prolipoprotein diacylglyceryl transferase (Rhizobium leguminosarum bv. trifolii (strain WSM2304)).